The sequence spans 192 residues: Cytidylate kinase (192 aa).

7-15 serves as a coordination point for ATP; that stretch reads GPPGSGKST.

Belongs to the cytidylate kinase family. Type 2 subfamily.

It is found in the cytoplasm. It catalyses the reaction CMP + ATP = CDP + ADP. The enzyme catalyses dCMP + ATP = dCDP + ADP. The polypeptide is Cytidylate kinase (Halobacterium salinarum (strain ATCC 29341 / DSM 671 / R1)).